The sequence spans 469 residues: Protein RUFY3 (469 aa).

A phosphothreonine mark is found at threonine 5 and threonine 12. Phosphoserine is present on residues serine 34 and serine 49. A Phosphothreonine modification is found at threonine 51. The region spanning 95 to 227 (DSDYAPLQQF…IDANFCMKGE (133 aa)) is the RUN domain. 2 coiled-coil regions span residues 271 to 362 (NRHL…VEKE) and 422 to 463 (KSEL…AANK).

In terms of assembly, interacts with PAK1. Interacts (via C-terminus) with Ras-related Rab-5 proteins. Interacts (via C-terminus) with Ras-related Rap-2 proteins. Interacts with PIK3CA and PIK3R1. Interacts (via N-terminus) with FSCN1; this interaction induces neuron axon development. Interacts with DBN1. Interacts (via the second coiled coil) with GTP-, but not GDP-bound ARL8A and ARL8B. Interacts with dynactin/DCTN1 and the dynein intermediate chain DYNC1I1/2. Directly interacts with DYNC1LI1. In terms of processing, isoform 1 is partially phosphorylated. Phosphorylated by PAK1. As to expression, expressed in brain (at protein level).

It localises to the cytoplasm. The protein localises to the endomembrane system. The protein resides in the cell projection. It is found in the invadopodium. Its subcellular location is the growth cone. It localises to the perikaryon. The protein localises to the filopodium. The protein resides in the lamellipodium. It is found in the lysosome. Functionally, ARL8 effector that promotes the coupling of endolysosomes to dynein-dynactin for retrograde transport along microtubules. Acts by binding both GTP-bound ARL8 and dynein-dynactin. In nonneuronal cells, promotes concentration of endolysosomes in the juxtanuclear area. In hippocampal neurons, drives retrograde transport of endolysosomes from the axon to the soma. Plays a role in the generation of neuronal polarity formation and axon growth. Implicated in the formation of a single axon by developing neurons. May inhibit the formation of additional axons by inhibition of PI3K in minor neuronal processes. Plays a role in the formation of F-actin-enriched protrusive structures at the cell periphery. Plays a role in cytoskeletal organization by regulating the subcellular localization of FSCN1 and DBN1 at axonal growth cones. The sequence is that of Protein RUFY3 from Rattus norvegicus (Rat).